The sequence spans 519 residues: Cysteine--tRNA ligase (519 aa).

C30 serves as a coordination point for Zn(2+). Residues 32 to 42 carry the 'HIGH' region motif; sequence PTVYDRAHLGN. Zn(2+) is bound by residues C221, H253, and E257. Residues 286-290 carry the 'KMSKS' region motif; sequence KMSKS. K289 lines the ATP pocket.

The protein belongs to the class-I aminoacyl-tRNA synthetase family. Monomer. It depends on Zn(2+) as a cofactor.

It is found in the cytoplasm. The enzyme catalyses tRNA(Cys) + L-cysteine + ATP = L-cysteinyl-tRNA(Cys) + AMP + diphosphate. This is Cysteine--tRNA ligase from Cereibacter sphaeroides (strain KD131 / KCTC 12085) (Rhodobacter sphaeroides).